The sequence spans 89 residues: UPF0223 protein BCA_4066 (89 aa).

Belongs to the UPF0223 family.

The sequence is that of UPF0223 protein BCA_4066 from Bacillus cereus (strain 03BB102).